The chain runs to 171 residues: Small ribosomal subunit protein uS5 (171 aa).

Residues 15–78 (LKDRLVAINR…EAAKKNLTRV (64 aa)) enclose the S5 DRBM domain.

Belongs to the universal ribosomal protein uS5 family. Part of the 30S ribosomal subunit. Contacts proteins S4 and S8.

In terms of biological role, with S4 and S12 plays an important role in translational accuracy. Located at the back of the 30S subunit body where it stabilizes the conformation of the head with respect to the body. The protein is Small ribosomal subunit protein uS5 of Phocaeicola vulgatus (strain ATCC 8482 / DSM 1447 / JCM 5826 / CCUG 4940 / NBRC 14291 / NCTC 11154) (Bacteroides vulgatus).